Reading from the N-terminus, the 232-residue chain is Large ribosomal subunit protein uL1 (232 aa).

It belongs to the universal ribosomal protein uL1 family. As to quaternary structure, part of the 50S ribosomal subunit.

Its function is as follows. Binds directly to 23S rRNA. The L1 stalk is quite mobile in the ribosome, and is involved in E site tRNA release. Functionally, protein L1 is also a translational repressor protein, it controls the translation of the L11 operon by binding to its mRNA. The protein is Large ribosomal subunit protein uL1 of Bartonella henselae (strain ATCC 49882 / DSM 28221 / CCUG 30454 / Houston 1) (Rochalimaea henselae).